The following is a 599-amino-acid chain: Elongation factor 4 (599 aa).

The 183-residue stretch at 5–187 folds into the tr-type G domain; the sequence is SHIRNFSIIA…RLVTVIPAPE (183 aa). GTP-binding positions include 17-22 and 134-137; these read DHGKST and NKMD.

Belongs to the TRAFAC class translation factor GTPase superfamily. Classic translation factor GTPase family. LepA subfamily.

The protein localises to the cell inner membrane. The catalysed reaction is GTP + H2O = GDP + phosphate + H(+). Its function is as follows. Required for accurate and efficient protein synthesis under certain stress conditions. May act as a fidelity factor of the translation reaction, by catalyzing a one-codon backward translocation of tRNAs on improperly translocated ribosomes. Back-translocation proceeds from a post-translocation (POST) complex to a pre-translocation (PRE) complex, thus giving elongation factor G a second chance to translocate the tRNAs correctly. Binds to ribosomes in a GTP-dependent manner. In Pseudomonas paraeruginosa (strain DSM 24068 / PA7) (Pseudomonas aeruginosa (strain PA7)), this protein is Elongation factor 4.